A 142-amino-acid polypeptide reads, in one-letter code: uncharacterized protein (142 aa).

The interval 1 to 31 (MSLPKKKKPEVEEEEKPEEEEEKEEEQEIDI) is disordered. Over residues 11–29 (VEEEEKPEEEEEKEEEQEI) the composition is skewed to acidic residues.

This is an uncharacterized protein from Acidianus sp. F28 (AFV-2).